The sequence spans 44 residues: Cytochrome b559 subunit beta (44 aa).

Residues 19–35 (WLAVHTLAVPTVFFIGA) traverse the membrane as a helical segment. His-23 lines the heme pocket.

This sequence belongs to the PsbE/PsbF family. As to quaternary structure, heterodimer of an alpha subunit and a beta subunit. PSII is composed of 1 copy each of membrane proteins PsbA, PsbB, PsbC, PsbD, PsbE, PsbF, PsbH, PsbI, PsbJ, PsbK, PsbL, PsbM, PsbT, PsbX, PsbY, PsbZ, Psb30/Ycf12, peripheral proteins PsbO, CyanoQ (PsbQ), PsbU, PsbV and a large number of cofactors. It forms dimeric complexes. It depends on heme b as a cofactor.

The protein localises to the cellular thylakoid membrane. Functionally, this b-type cytochrome is tightly associated with the reaction center of photosystem II (PSII). PSII is a light-driven water:plastoquinone oxidoreductase that uses light energy to abstract electrons from H(2)O, generating O(2) and a proton gradient subsequently used for ATP formation. It consists of a core antenna complex that captures photons, and an electron transfer chain that converts photonic excitation into a charge separation. This is Cytochrome b559 subunit beta from Gloeothece citriformis (strain PCC 7424) (Cyanothece sp. (strain PCC 7424)).